Consider the following 572-residue polypeptide: Sulfite reductase [NADPH] hemoprotein beta-component (572 aa).

[4Fe-4S] cluster is bound by residues C437, C443, C482, and C486. C486 contributes to the siroheme binding site.

It belongs to the nitrite and sulfite reductase 4Fe-4S domain family. As to quaternary structure, alpha(8)-beta(8). The alpha component is a flavoprotein, the beta component is a hemoprotein. The cofactor is siroheme. [4Fe-4S] cluster is required as a cofactor.

It catalyses the reaction hydrogen sulfide + 3 NADP(+) + 3 H2O = sulfite + 3 NADPH + 4 H(+). Its pathway is sulfur metabolism; hydrogen sulfide biosynthesis; hydrogen sulfide from sulfite (NADPH route): step 1/1. Its function is as follows. Component of the sulfite reductase complex that catalyzes the 6-electron reduction of sulfite to sulfide. This is one of several activities required for the biosynthesis of L-cysteine from sulfate. The polypeptide is Sulfite reductase [NADPH] hemoprotein beta-component (Bacillus licheniformis (strain ATCC 14580 / DSM 13 / JCM 2505 / CCUG 7422 / NBRC 12200 / NCIMB 9375 / NCTC 10341 / NRRL NRS-1264 / Gibson 46)).